Here is a 488-residue protein sequence, read N- to C-terminus: MNFTPTHTPVCRKRTVVSKRGVAVSGPTKRRGMADSLESTPLPSPEDRLAKLHPSKELLEYYQKKMAECEAENEDLLKKLELYKEACEGQHKLECDLQQREEEIAELQKALSDMQVCLFQEREHVLRLYSENDRLRIRELEDKKKIQNLLALVGTDAGEVTYFCKEPPHKVTILQKTIQAVGECEQSESSAFKADPKISKRRPSRERKESSEHYQRDIQTLILQVEALQAQLGEQTKLSREQIEGLIEDRRIHLEEIQVQHQRNQNKIKELTKNLHHTQELLYESTKDFLQLRSENQNKEKSWMLEKDNLMSKIKQYRVQCKKKEDKIGKVLPVMHESHHAQSEYIKSLKDKLVQEKKLSNMYQEQCISLEEELARIREEEGMRREIFKDRTNKMGKRLQIMTKRYEALERRRILEVEGFKTDIKVLRQKLKDLEQMLYKATVNARANQDLALLCEVRDSNRRAHKIQGELKNLKSKVFGLENELRLC.

The interval 21 to 48 is disordered; it reads GVAVSGPTKRRGMADSLESTPLPSPEDR. Ser-36 is subject to Phosphoserine. Lys-51 participates in a covalent cross-link: Glycyl lysine isopeptide (Lys-Gly) (interchain with G-Cter in SUMO2). Coiled-coil stretches lie at residues 55–118 and 208–488; these read SKEL…QVCL and KESS…LRLC. The interval 192-213 is disordered; that stretch reads FKADPKISKRRPSRERKESSEH.

This is Coiled-coil domain-containing protein 77 (CCDC77) from Homo sapiens (Human).